A 215-amino-acid chain; its full sequence is Protein-L-isoaspartate O-methyltransferase (215 aa).

S62 is a catalytic residue.

It belongs to the methyltransferase superfamily. L-isoaspartyl/D-aspartyl protein methyltransferase family.

Its subcellular location is the cytoplasm. It carries out the reaction [protein]-L-isoaspartate + S-adenosyl-L-methionine = [protein]-L-isoaspartate alpha-methyl ester + S-adenosyl-L-homocysteine. Functionally, catalyzes the methyl esterification of L-isoaspartyl residues in peptides and proteins that result from spontaneous decomposition of normal L-aspartyl and L-asparaginyl residues. It plays a role in the repair and/or degradation of damaged proteins. The protein is Protein-L-isoaspartate O-methyltransferase of Rhodopseudomonas palustris (strain BisA53).